The following is a 141-amino-acid chain: Nucleoside diphosphate kinase (141 aa).

Residues lysine 11, phenylalanine 59, arginine 87, threonine 93, arginine 104, and asparagine 114 each contribute to the ATP site. The active-site Pros-phosphohistidine intermediate is histidine 117.

It belongs to the NDK family. As to quaternary structure, homotetramer. Mg(2+) serves as cofactor.

It localises to the cytoplasm. It catalyses the reaction a 2'-deoxyribonucleoside 5'-diphosphate + ATP = a 2'-deoxyribonucleoside 5'-triphosphate + ADP. The enzyme catalyses a ribonucleoside 5'-diphosphate + ATP = a ribonucleoside 5'-triphosphate + ADP. Its function is as follows. Major role in the synthesis of nucleoside triphosphates other than ATP. The ATP gamma phosphate is transferred to the NDP beta phosphate via a ping-pong mechanism, using a phosphorylated active-site intermediate. This Verminephrobacter eiseniae (strain EF01-2) protein is Nucleoside diphosphate kinase.